Consider the following 337-residue polypeptide: Inositol 2-dehydrogenase (337 aa).

This sequence belongs to the Gfo/Idh/MocA family. Homotetramer.

The catalysed reaction is myo-inositol + NAD(+) = scyllo-inosose + NADH + H(+). Its function is as follows. Involved in the oxidation of myo-inositol (MI) to 2-keto-myo-inositol (2KMI or 2-inosose). The sequence is that of Inositol 2-dehydrogenase from Gluconacetobacter diazotrophicus (strain ATCC 49037 / DSM 5601 / CCUG 37298 / CIP 103539 / LMG 7603 / PAl5).